We begin with the raw amino-acid sequence, 89 residues long: Small ribosomal subunit protein uS15 (89 aa).

Belongs to the universal ribosomal protein uS15 family. In terms of assembly, part of the 30S ribosomal subunit. Forms a bridge to the 50S subunit in the 70S ribosome, contacting the 23S rRNA.

One of the primary rRNA binding proteins, it binds directly to 16S rRNA where it helps nucleate assembly of the platform of the 30S subunit by binding and bridging several RNA helices of the 16S rRNA. Its function is as follows. Forms an intersubunit bridge (bridge B4) with the 23S rRNA of the 50S subunit in the ribosome. The sequence is that of Small ribosomal subunit protein uS15 from Pseudomonas savastanoi pv. phaseolicola (strain 1448A / Race 6) (Pseudomonas syringae pv. phaseolicola (strain 1448A / Race 6)).